The primary structure comprises 458 residues: Bifunctional protein GlmU (458 aa).

The interval 1-229 (MNKFAIVLAA…FDESLGVNDR (229 aa)) is pyrophosphorylase. Residues 8–11 (LAAG), K22, Q72, and 77–78 (GT) each bind UDP-N-acetyl-alpha-D-glucosamine. D102 contacts Mg(2+). The UDP-N-acetyl-alpha-D-glucosamine site is built by G139, E154, N169, and N227. N227 lines the Mg(2+) pocket. A linker region spans residues 230–250 (VALSQAEGTMRKRINHEHMVN). The segment at 251 to 458 (GVTLIDPATT…AKKMPHYRGQ (208 aa)) is N-acetyltransferase. UDP-N-acetyl-alpha-D-glucosamine contacts are provided by R332 and K350. H362 (proton acceptor) is an active-site residue. Positions 365 and 376 each coordinate UDP-N-acetyl-alpha-D-glucosamine. A379, S404, A422, and R439 together coordinate acetyl-CoA.

This sequence in the N-terminal section; belongs to the N-acetylglucosamine-1-phosphate uridyltransferase family. In the C-terminal section; belongs to the transferase hexapeptide repeat family. As to quaternary structure, homotrimer. Mg(2+) is required as a cofactor.

It is found in the cytoplasm. It carries out the reaction alpha-D-glucosamine 1-phosphate + acetyl-CoA = N-acetyl-alpha-D-glucosamine 1-phosphate + CoA + H(+). The enzyme catalyses N-acetyl-alpha-D-glucosamine 1-phosphate + UTP + H(+) = UDP-N-acetyl-alpha-D-glucosamine + diphosphate. It participates in nucleotide-sugar biosynthesis; UDP-N-acetyl-alpha-D-glucosamine biosynthesis; N-acetyl-alpha-D-glucosamine 1-phosphate from alpha-D-glucosamine 6-phosphate (route II): step 2/2. It functions in the pathway nucleotide-sugar biosynthesis; UDP-N-acetyl-alpha-D-glucosamine biosynthesis; UDP-N-acetyl-alpha-D-glucosamine from N-acetyl-alpha-D-glucosamine 1-phosphate: step 1/1. Its pathway is bacterial outer membrane biogenesis; LPS lipid A biosynthesis. Catalyzes the last two sequential reactions in the de novo biosynthetic pathway for UDP-N-acetylglucosamine (UDP-GlcNAc). The C-terminal domain catalyzes the transfer of acetyl group from acetyl coenzyme A to glucosamine-1-phosphate (GlcN-1-P) to produce N-acetylglucosamine-1-phosphate (GlcNAc-1-P), which is converted into UDP-GlcNAc by the transfer of uridine 5-monophosphate (from uridine 5-triphosphate), a reaction catalyzed by the N-terminal domain. This Lactococcus lactis subsp. cremoris (strain SK11) protein is Bifunctional protein GlmU.